The chain runs to 542 residues: CTP synthase (542 aa).

Residues 1-265 (MARYVFITGG…DSEVLAAFGI (265 aa)) form an amidoligase domain region. Ser-13 contacts CTP. UTP is bound at residue Ser-13. 14 to 19 (SLGKGI) lines the ATP pocket. Position 54 (Tyr-54) interacts with L-glutamine. Position 71 (Asp-71) interacts with ATP. Residues Asp-71 and Glu-139 each coordinate Mg(2+). CTP contacts are provided by residues 146-148 (DIE), 186-191 (KTKPTQ), and Lys-222. UTP contacts are provided by residues 186–191 (KTKPTQ) and Lys-222. One can recognise a Glutamine amidotransferase type-1 domain in the interval 291 to 541 (TIAIVGKYTG…IAAAVEQSRL (251 aa)). Gly-353 serves as a coordination point for L-glutamine. Cys-380 acts as the Nucleophile; for glutamine hydrolysis in catalysis. L-glutamine-binding positions include 381-384 (FGMQ), Glu-404, and Arg-469. Catalysis depends on residues His-514 and Glu-516.

It belongs to the CTP synthase family. As to quaternary structure, homotetramer.

It carries out the reaction UTP + L-glutamine + ATP + H2O = CTP + L-glutamate + ADP + phosphate + 2 H(+). The enzyme catalyses L-glutamine + H2O = L-glutamate + NH4(+). The catalysed reaction is UTP + NH4(+) + ATP = CTP + ADP + phosphate + 2 H(+). Its pathway is pyrimidine metabolism; CTP biosynthesis via de novo pathway; CTP from UDP: step 2/2. With respect to regulation, allosterically activated by GTP, when glutamine is the substrate; GTP has no effect on the reaction when ammonia is the substrate. The allosteric effector GTP functions by stabilizing the protein conformation that binds the tetrahedral intermediate(s) formed during glutamine hydrolysis. Inhibited by the product CTP, via allosteric rather than competitive inhibition. In terms of biological role, catalyzes the ATP-dependent amination of UTP to CTP with either L-glutamine or ammonia as the source of nitrogen. Regulates intracellular CTP levels through interactions with the four ribonucleotide triphosphates. The sequence is that of CTP synthase from Chelativorans sp. (strain BNC1).